The sequence spans 970 residues: Anaphase-promoting complex subunit 3 (970 aa).

4 TPR repeats span residues 35-68 (EDNL…TMIK), 74-107 (ALSN…NNNN), 142-175 (NNNS…NSIS), and 185-218 (GSVY…YPFL). Positions 106 to 149 (NNNNNNNNNNNNNNNNNNNNNNNKDKCNNSNKNNDSNNNSNSNN) are disordered. A disordered region spans residues 274–300 (KVNNNNNNNNNNNNNINNNNSSNKNNE). TPR repeat units lie at residues 319–353 (IKPN…TPIN) and 361–394 (TNQQ…TPQT). 3 disordered regions span residues 358 to 379 (IQQT…PSQQ), 414 to 525 (PIPM…TTTT), and 556 to 582 (SSLS…HNKS). A compositionally biased stretch (low complexity) spans 359 to 379 (QQTNQQQQQQQQQQPQQPSQQ). Residues 424 to 443 (SKGSQHPPSSNSQTPYTPST) show a composition bias toward polar residues. Over residues 446–460 (VHHHQKQQPHQHKKS) the composition is skewed to basic residues. Residues 500–525 (TSSTSKQQQQQQQTKQQTTTTTTTTT) are compositionally biased toward low complexity. TPR repeat units lie at residues 546 to 580 (TEEF…HHHN), 636 to 671 (LELF…QYRT), 672 to 705 (GWVL…EPYR), 740 to 773 (PYSW…DPDM), 775 to 807 (YAYT…DPRH), 808 to 841 (YNAF…NESS), 843 to 876 (VLCC…QPKN), 878 to 910 (FAKF…EPKE), and 911 to 944 (TPIY…DPKN). Positions 570-580 (YQQHHHLHHHN) are enriched in basic residues.

Belongs to the APC3/CDC27 family. In terms of assembly, the APC/C is composed of at least 13 subunits that stay tightly associated throughout the cell cycle: anapc1, anapc2, anapc3, anapc4, anapc5, anapc6, anapc7, anapc8, anapc10, anapc11, cdc20, cdc26 and cdh1.

Its subcellular location is the nucleus. Its pathway is protein modification; protein ubiquitination. Component of the anaphase promoting complex/cyclosome (APC/C), a cell cycle-regulated E3 ubiquitin-protein ligase complex that controls progression through mitosis and the G1 phase of the cell cycle. This is Anaphase-promoting complex subunit 3 (anapc3) from Dictyostelium discoideum (Social amoeba).